Here is a 365-residue protein sequence, read N- to C-terminus: GTPase Obg (365 aa).

An Obg domain is found at 1 to 159; sequence MKFIDEARIE…RMLKLELKVL (159 aa). The region spanning 160-334 is the OBG-type G domain; it reads ADVGLLGMPN…LVYAIKDHLA (175 aa). GTP is bound by residues 166-173, 191-195, 213-216, 284-287, and 315-317; these read GMPNAGKS, FTTLH, DIPG, NKLD, and SAL. Mg(2+) contacts are provided by Ser-173 and Thr-193.

The protein belongs to the TRAFAC class OBG-HflX-like GTPase superfamily. OBG GTPase family. As to quaternary structure, monomer. It depends on Mg(2+) as a cofactor.

The protein resides in the cytoplasm. In terms of biological role, an essential GTPase which binds GTP, GDP and possibly (p)ppGpp with moderate affinity, with high nucleotide exchange rates and a fairly low GTP hydrolysis rate. Plays a role in control of the cell cycle, stress response, ribosome biogenesis and in those bacteria that undergo differentiation, in morphogenesis control. The protein is GTPase Obg of Cupriavidus metallidurans (strain ATCC 43123 / DSM 2839 / NBRC 102507 / CH34) (Ralstonia metallidurans).